Here is a 282-residue protein sequence, read N- to C-terminus: MLLAIPSKGRLQEPTLRLLEAVGIKPLASDERALVLPTSWNDVNIIKARPEDIPYLVDSGRIWAGITGHDYIIESGSNVVEVLDLEFGKGKLVVAVPKTSGIKSIDELPPGARVATKFVNIAYNYFAELGKRVRIVRVAGSVEILPQLGIADAILDVMATGTTLEIHGLTPIATVLETSARLIVHPNYVNHELTKKLVTFIKGYYAAQGRKMIFLNVPATKLEDVLSILPAMEAPSVTKLAKGDVYEVFSVVPEDILPDLVMKLKNAGAKDIVVTSIEKLIS.

Belongs to the ATP phosphoribosyltransferase family. Long subfamily. Requires Mg(2+) as cofactor.

The protein localises to the cytoplasm. It carries out the reaction 1-(5-phospho-beta-D-ribosyl)-ATP + diphosphate = 5-phospho-alpha-D-ribose 1-diphosphate + ATP. Its pathway is amino-acid biosynthesis; L-histidine biosynthesis; L-histidine from 5-phospho-alpha-D-ribose 1-diphosphate: step 1/9. With respect to regulation, feedback inhibited by histidine. Catalyzes the condensation of ATP and 5-phosphoribose 1-diphosphate to form N'-(5'-phosphoribosyl)-ATP (PR-ATP). Has a crucial role in the pathway because the rate of histidine biosynthesis seems to be controlled primarily by regulation of HisG enzymatic activity. The sequence is that of ATP phosphoribosyltransferase from Pyrobaculum islandicum (strain DSM 4184 / JCM 9189 / GEO3).